Consider the following 463-residue polypeptide: tRNA-splicing endonuclease subunit Sen2 (463 aa).

Serine 32 and serine 147 each carry phosphoserine. The interval 120 to 213 (HDESTVQKIL…VASPSSLNGH (94 aa)) is disordered. 2 stretches are compositionally biased toward basic and acidic residues: residues 139-149 (PYRERKGESPQ) and 159-170 (SSLEGREGKDEL). Active-site residues include tyrosine 367 and histidine 375. Residues serine 406, serine 409, and serine 413 each carry the phosphoserine modification. Lysine 414 is an active-site residue.

This sequence belongs to the tRNA-intron endonuclease family. TRNA splicing endonuclease is a heterotetramer composed of TSEN2, TSEN15, TSEN34/LENG5 and TSEN54. tRNA splicing endonuclease complex also contains proteins of the pre-mRNA 3'-end processing machinery such as CLP1, CPSF1, CPSF4 and CSTF2.

The protein localises to the nucleus. It localises to the nucleolus. It catalyses the reaction pretRNA = a 3'-half-tRNA molecule with a 5'-OH end + a 5'-half-tRNA molecule with a 2',3'-cyclic phosphate end + an intron with a 2',3'-cyclic phosphate and a 5'-hydroxyl terminus.. Constitutes one of the two catalytic subunit of the tRNA-splicing endonuclease complex, a complex responsible for identification and cleavage of the splice sites in pre-tRNA. It cleaves pre-tRNA at the 5'- and 3'-splice sites to release the intron. The products are an intron and two tRNA half-molecules bearing 2',3'-cyclic phosphate and 5'-OH termini. There are no conserved sequences at the splice sites, but the intron is invariably located at the same site in the gene, placing the splice sites an invariant distance from the constant structural features of the tRNA body. Probably carries the active site for 5'-splice site cleavage. The tRNA splicing endonuclease is also involved in mRNA processing via its association with pre-mRNA 3'-end processing factors, establishing a link between pre-tRNA splicing and pre-mRNA 3'-end formation, suggesting that the endonuclease subunits function in multiple RNA-processing events. The polypeptide is tRNA-splicing endonuclease subunit Sen2 (Tsen2) (Rattus norvegicus (Rat)).